An 81-amino-acid polypeptide reads, in one-letter code: Photosystem I iron-sulfur center (81 aa).

2 consecutive 4Fe-4S ferredoxin-type domains span residues A2 to W31 and I39 to Y68. [4Fe-4S] cluster is bound by residues C11, C14, C17, C21, C48, C51, C54, and C58.

As to quaternary structure, the eukaryotic PSI reaction center is composed of at least 11 subunits. Requires [4Fe-4S] cluster as cofactor.

The protein resides in the plastid. It is found in the chloroplast thylakoid membrane. It catalyses the reaction reduced [plastocyanin] + hnu + oxidized [2Fe-2S]-[ferredoxin] = oxidized [plastocyanin] + reduced [2Fe-2S]-[ferredoxin]. Functionally, apoprotein for the two 4Fe-4S centers FA and FB of photosystem I (PSI); essential for photochemical activity. FB is the terminal electron acceptor of PSI, donating electrons to ferredoxin. The C-terminus interacts with PsaA/B/D and helps assemble the protein into the PSI complex. Required for binding of PsaD and PsaE to PSI. PSI is a plastocyanin-ferredoxin oxidoreductase, converting photonic excitation into a charge separation, which transfers an electron from the donor P700 chlorophyll pair to the spectroscopically characterized acceptors A0, A1, FX, FA and FB in turn. The chain is Photosystem I iron-sulfur center from Gnetum parvifolium (Small-leaved jointfir).